A 189-amino-acid polypeptide reads, in one-letter code: Chitin synthase 3 (189 aa).

Belongs to the chitin synthase family. Class II subfamily.

The protein localises to the cell membrane. The enzyme catalyses [(1-&gt;4)-N-acetyl-beta-D-glucosaminyl](n) + UDP-N-acetyl-alpha-D-glucosamine = [(1-&gt;4)-N-acetyl-beta-D-glucosaminyl](n+1) + UDP + H(+). Its function is as follows. Polymerizes chitin, a structural polymer of the cell wall and septum, by transferring the sugar moiety of UDP-GlcNAc to the non-reducing end of the growing chitin polymer. This Ajellomyces capsulatus (Darling's disease fungus) protein is Chitin synthase 3 (CHS3).